The primary structure comprises 300 residues: MSGKRVCPVCGSTEFIYDPSRGEIVCKVCGYVIEENVVDEGPEWRAFDPGQREKRARVGAPESILLHDKGLSTDIGIDRSLTGLMREKMYRLRKWQSRLRVSDAAERNLAFALSELDRLASNLSLPKHVEEEAARLYREAVRKGLIRGRSIEAVIAACVYAACRLLKVPRTLDEIADVSRVDKKEIGRSFRFIARHLNLTPKKLFVKPTDYVNKFADELGLSEKVRRRAIEILEEAYQRGLTSGKSPAGLVAAALYIASLMEGEKRTQREVAEVARVTEVTVRNRYKELVEKLNLKVPIA.

The TFIIB-type zinc finger occupies 3–34 (GKRVCPVCGSTEFIYDPSRGEIVCKVCGYVIE). Residues Cys7, Cys10, Cys26, and Cys29 each coordinate Zn(2+). 2 repeat units span residues 114–197 (SELD…ARHL) and 210–291 (DYVN…ELVE).

It belongs to the TFIIB family.

In terms of biological role, stabilizes TBP binding to an archaeal box-A promoter. Also responsible for recruiting RNA polymerase II to the pre-initiation complex (DNA-TBP-TFIIB). The polypeptide is Transcription initiation factor IIB 1 (Thermococcus kodakarensis (strain ATCC BAA-918 / JCM 12380 / KOD1) (Pyrococcus kodakaraensis (strain KOD1))).